The primary structure comprises 97 residues: Large ribosomal subunit protein bL27 (97 aa).

The propeptide occupies 1-12; it reads MIKLNLSNLQHF. Residues 13–38 are disordered; it reads AHKKGGGSTSNGRDSQAKRLGAKAAD.

This sequence belongs to the bacterial ribosomal protein bL27 family. In terms of processing, the N-terminus is cleaved by ribosomal processing cysteine protease Prp.

The sequence is that of Large ribosomal subunit protein bL27 from Streptococcus equi subsp. equi (strain 4047).